The primary structure comprises 354 residues: Probable L-ascorbate-6-phosphate lactonase UlaG (354 aa).

This sequence belongs to the UlaG family. Requires a divalent metal cation as cofactor.

The protein localises to the cytoplasm. It carries out the reaction L-ascorbate 6-phosphate + H2O = 3-dehydro-L-gulonate 6-phosphate. It functions in the pathway cofactor degradation; L-ascorbate degradation; D-xylulose 5-phosphate from L-ascorbate: step 1/4. Its function is as follows. Probably catalyzes the hydrolysis of L-ascorbate-6-P into 3-keto-L-gulonate-6-P. Is essential for L-ascorbate utilization under anaerobic conditions. This Salmonella gallinarum (strain 287/91 / NCTC 13346) protein is Probable L-ascorbate-6-phosphate lactonase UlaG.